The following is a 180-amino-acid chain: Probable phospholipid hydroperoxide glutathione peroxidase (180 aa).

C54 is a catalytic residue.

It belongs to the glutathione peroxidase family.

The protein localises to the cytoplasm. It carries out the reaction a hydroperoxy polyunsaturated fatty acid + 2 glutathione = a hydroxy polyunsaturated fatty acid + glutathione disulfide + H2O. Its function is as follows. Protects cells and enzymes from oxidative damage, by catalyzing the reduction of hydrogen peroxide, lipid peroxides and organic hydroperoxide, by glutathione. In Helianthus annuus (Common sunflower), this protein is Probable phospholipid hydroperoxide glutathione peroxidase (GPXHA-2).